A 159-amino-acid polypeptide reads, in one-letter code: Small ribosomal subunit protein uS4 (159 aa).

One can recognise an S4 RNA-binding domain in the interval 106-158; the sequence is RRLQTIVYRMGLAKSIHHARQLIVHGHVAVAGRRVTSPGFLVPRELEDKISLI.

Belongs to the universal ribosomal protein uS4 family. In terms of assembly, part of the 30S ribosomal subunit. Contacts protein S5. The interaction surface between S4 and S5 is involved in control of translational fidelity.

Functionally, one of the primary rRNA binding proteins, it binds directly to 16S rRNA where it nucleates assembly of the body of the 30S subunit. In terms of biological role, with S5 and S12 plays an important role in translational accuracy. The sequence is that of Small ribosomal subunit protein uS4 from Pyrobaculum aerophilum (strain ATCC 51768 / DSM 7523 / JCM 9630 / CIP 104966 / NBRC 100827 / IM2).